The chain runs to 221 residues: Potassium voltage-gated channel subfamily E member 4 (221 aa).

Topologically, residues M1 to E86 are extracellular. N-linked (GlcNAc...) asparagine glycosylation occurs at N9. The segment covering L58 to L72 has biased composition (polar residues). The interval L58–A77 is disordered. Residues Y87 to G107 form a helical membrane-spanning segment. The Cytoplasmic portion of the chain corresponds to Y108–S221. The tract at residues S175 to S221 is disordered. Residues E192–S202 show a composition bias toward acidic residues. Residues E203–S221 show a composition bias toward polar residues.

It belongs to the potassium channel KCNE family. In terms of assembly, forms heterooligomers with KCNA3, inhibiting its activity by impairing localization to the cell membrane. The stoichiometry of KCNA3 and KCNE4 in the heterooligomers are 4:1, 4:2, 4:3 or 4:4 respectively. Increasing the number of KCNE4 subunits steadily slows the activation KCNA3 and decreases its abundance at the cell membrane. However, a single subunit of KCNE4 is sufficient for the cooperative enhancement of the inactivating function of the channel. However, a single subunit of KCNE4 is sufficient for the cooperative enhancement of the inactivating function of the channel. Interacts with KCNQ1; impairs KCNQ1 localization in lipid rafts and inhibits voltage-gated potassium channel activity. In terms of tissue distribution, predominantly expressed in embryo and adult uterus. Low expression found in kidney, small intestine, lung and heart. Detected in kidney, thymus, and uterus (at protein level).

It localises to the membrane. Ancillary protein that functions as a regulatory subunit of the voltage-gated potassium (Kv) channel complex composed of pore-forming and potassium-conducting alpha subunits and of regulatory beta subunits. KCNE4 beta subunit modulates the gating kinetics and enhances stability of the channel complex. Associates with KCNQ1/KVLTQ1 alpha subunit to inhibit potassium currents. Functionally, may inhibit KCNQ4-mediated potassium currents. In Homo sapiens (Human), this protein is Potassium voltage-gated channel subfamily E member 4.